The chain runs to 140 residues: Putative peptidyl-tRNA hydrolase PTRHD1 (140 aa).

Belongs to the PTH2 family. PTRHD1 subfamily.

The enzyme catalyses an N-acyl-L-alpha-aminoacyl-tRNA + H2O = an N-acyl-L-amino acid + a tRNA + H(+). As a putative peptidyl-tRNA hydrolase, it might be involved in releasing tRNAs from the ribosome during protein synthesis. Some evidence, however, suggests that it lacks peptidyl-tRNA hydrolase activity. The chain is Putative peptidyl-tRNA hydrolase PTRHD1 (PTRHD1) from Homo sapiens (Human).